The primary structure comprises 226 residues: Eukaryotic translation initiation factor 3 subunit K (226 aa).

Residues 42-200 (YNLDANLSLL…QLIVLPRNEF (159 aa)) form the PCI domain.

The protein belongs to the eIF-3 subunit K family. Component of the eukaryotic translation initiation factor 3 (eIF-3) complex.

The protein localises to the cytoplasm. Functionally, component of the eukaryotic translation initiation factor 3 (eIF-3) complex, which is involved in protein synthesis of a specialized repertoire of mRNAs and, together with other initiation factors, stimulates binding of mRNA and methionyl-tRNAi to the 40S ribosome. The eIF-3 complex specifically targets and initiates translation of a subset of mRNAs involved in cell proliferation. This Oryza sativa subsp. japonica (Rice) protein is Eukaryotic translation initiation factor 3 subunit K (TIF3K1).